The sequence spans 265 residues: Flavin-dependent thymidylate synthase (265 aa).

A ThyX domain is found at G11–H224. Residues S56, R79 to R81, and E87 contribute to the FAD site. Q76–R79 is a dUMP binding site. Residues R79–S89 carry the ThyX motif motif. R155 contacts dUMP. FAD-binding positions include D171–N173 and H177. Residue R182 participates in dUMP binding. Residue R182 is the Involved in ionization of N3 of dUMP, leading to its activation of the active site.

Belongs to the thymidylate synthase ThyX family. Homotetramer. FAD is required as a cofactor.

The catalysed reaction is dUMP + (6R)-5,10-methylene-5,6,7,8-tetrahydrofolate + NADPH + H(+) = dTMP + (6S)-5,6,7,8-tetrahydrofolate + NADP(+). Its pathway is pyrimidine metabolism; dTTP biosynthesis. In terms of biological role, catalyzes the reductive methylation of 2'-deoxyuridine-5'-monophosphate (dUMP) to 2'-deoxythymidine-5'-monophosphate (dTMP) while utilizing 5,10-methylenetetrahydrofolate (mTHF) as the methyl donor, and NADPH and FADH(2) as the reductant. The polypeptide is Flavin-dependent thymidylate synthase (Borreliella burgdorferi (strain ATCC 35210 / DSM 4680 / CIP 102532 / B31) (Borrelia burgdorferi)).